The following is a 152-amino-acid chain: Mid1-interacting protein 1A (152 aa).

Basic and acidic residues predominate over residues 87–105 (SEDQRRKKDTSASEPVRTE). The tract at residues 87–109 (SEDQRRKKDTSASEPVRTEEESD) is disordered.

It belongs to the SPOT14 family. As to expression, expressed for a short period in the cells that will produce the enveloping layer (EVL).

It localises to the nucleus. It is found in the cytoplasm. Its subcellular location is the cytoskeleton. Its function is as follows. Involved in stabilization of microtubules. May play a role in the regulation of lipogenesis. The protein is Mid1-interacting protein 1A (mid1ip1a) of Danio rerio (Zebrafish).